The primary structure comprises 572 residues: Proline--tRNA ligase (572 aa).

The protein belongs to the class-II aminoacyl-tRNA synthetase family. ProS type 1 subfamily. As to quaternary structure, homodimer.

The protein localises to the cytoplasm. The enzyme catalyses tRNA(Pro) + L-proline + ATP = L-prolyl-tRNA(Pro) + AMP + diphosphate. Catalyzes the attachment of proline to tRNA(Pro) in a two-step reaction: proline is first activated by ATP to form Pro-AMP and then transferred to the acceptor end of tRNA(Pro). As ProRS can inadvertently accommodate and process non-cognate amino acids such as alanine and cysteine, to avoid such errors it has two additional distinct editing activities against alanine. One activity is designated as 'pretransfer' editing and involves the tRNA(Pro)-independent hydrolysis of activated Ala-AMP. The other activity is designated 'posttransfer' editing and involves deacylation of mischarged Ala-tRNA(Pro). The misacylated Cys-tRNA(Pro) is not edited by ProRS. This is Proline--tRNA ligase from Serratia proteamaculans (strain 568).